The sequence spans 271 residues: Formamidopyrimidine-DNA glycosylase (271 aa).

The active-site Schiff-base intermediate with DNA is the Pro2. Residue Glu3 is the Proton donor of the active site. Residue Lys57 is the Proton donor; for beta-elimination activity of the active site. Residues His90, Arg109, and Lys151 each contribute to the DNA site. The FPG-type zinc finger occupies 236-270; the sequence is HVYGRGSKSCTHCGNLLSEIRLGQRTTVFCGLCQT. Arg260 acts as the Proton donor; for delta-elimination activity in catalysis.

Belongs to the FPG family. In terms of assembly, monomer. Zn(2+) serves as cofactor.

The enzyme catalyses Hydrolysis of DNA containing ring-opened 7-methylguanine residues, releasing 2,6-diamino-4-hydroxy-5-(N-methyl)formamidopyrimidine.. It catalyses the reaction 2'-deoxyribonucleotide-(2'-deoxyribose 5'-phosphate)-2'-deoxyribonucleotide-DNA = a 3'-end 2'-deoxyribonucleotide-(2,3-dehydro-2,3-deoxyribose 5'-phosphate)-DNA + a 5'-end 5'-phospho-2'-deoxyribonucleoside-DNA + H(+). Involved in base excision repair of DNA damaged by oxidation or by mutagenic agents. Acts as a DNA glycosylase that recognizes and removes damaged bases. Has a preference for oxidized purines, such as 7,8-dihydro-8-oxoguanine (8-oxoG). Has AP (apurinic/apyrimidinic) lyase activity and introduces nicks in the DNA strand. Cleaves the DNA backbone by beta-delta elimination to generate a single-strand break at the site of the removed base with both 3'- and 5'-phosphates. In Shewanella denitrificans (strain OS217 / ATCC BAA-1090 / DSM 15013), this protein is Formamidopyrimidine-DNA glycosylase.